A 51-amino-acid chain; its full sequence is Large ribosomal subunit protein bL33 (51 aa).

It belongs to the bacterial ribosomal protein bL33 family.

The sequence is that of Large ribosomal subunit protein bL33 from Ruthia magnifica subsp. Calyptogena magnifica.